Consider the following 118-residue polypeptide: Ribonuclease P protein component (118 aa).

Belongs to the RnpA family. In terms of assembly, consists of a catalytic RNA component (M1 or rnpB) and a protein subunit.

The enzyme catalyses Endonucleolytic cleavage of RNA, removing 5'-extranucleotides from tRNA precursor.. Functionally, RNaseP catalyzes the removal of the 5'-leader sequence from pre-tRNA to produce the mature 5'-terminus. It can also cleave other RNA substrates such as 4.5S RNA. The protein component plays an auxiliary but essential role in vivo by binding to the 5'-leader sequence and broadening the substrate specificity of the ribozyme. The polypeptide is Ribonuclease P protein component (Rickettsia conorii (strain ATCC VR-613 / Malish 7)).